Consider the following 2030-residue polypeptide: Dedicator of cytokinesis protein 3 (2030 aa).

The SH3 domain maps to 6–67 (EEEKYGVVIC…PANYIHLKKA (62 aa)). Residues 421 to 599 (RNDLYLTLEK…ESFFISTQLS (179 aa)) enclose the C2 DOCK-type domain. The DOCKER domain occupies 1228–1635 (KSEINKEEMY…LYHEFPGLDK (408 aa)). Disordered stretches follow at residues 1641–1662 (SGTSTPRGNVLASHSPMSPESI), 1734–1771 (SSSQASPSSSSLSSTHSAPSQMITSAPSSARGSPSLPD), 1849–1927 (DTPP…ADED), and 1951–2030 (QPCR…RGEQ). Residue Ser1658 is modified to Phosphoserine. Low complexity predominate over residues 1734–1754 (SSSQASPSSSSLSSTHSAPSQ). The span at 1755-1765 (MITSAPSSARG) shows a compositional bias: polar residues. Over residues 1880-1902 (GSNSTLSGSASSGVSSLSESNFG) the composition is skewed to low complexity. Residues 1967 to 1977 (PMDPPALPPKP) are compositionally biased toward pro residues. An SH3-binding motif is present at residues 1970 to 1976 (PPALPPK). Composition is skewed to basic and acidic residues over residues 1984-2001 (ALEHDEGVLLREETERPR) and 2014-2030 (AKEEQARMAWEHGRGEQ).

It belongs to the DOCK family. In terms of assembly, interacts with presenilin proteins PSEN1 and PSEN2. Interacts with CRK. In normal brains, it is localized in the neuropil, and occasionally in the pyramidal cells, while in Alzheimer disease brains, it is associated with neurofibrillary tangles.

It localises to the cytoplasm. Potential guanine nucleotide exchange factor (GEF). GEF proteins activate some small GTPases by exchanging bound GDP for free GTP. Its interaction with presenilin proteins as well as its ability to stimulate Tau/MAPT phosphorylation suggest that it may be involved in Alzheimer disease. Ectopic expression in nerve cells decreases the secretion of amyloid-beta APBA1 protein and lowers the rate of cell-substratum adhesion, suggesting that it may affect the function of some small GTPase involved in the regulation of actin cytoskeleton or cell adhesion receptors. In Homo sapiens (Human), this protein is Dedicator of cytokinesis protein 3 (DOCK3).